The primary structure comprises 177 residues: Nucleoside triphosphate/diphosphate phosphatase (177 aa).

The active-site Proton donor is the R23. Positions 87, 103, 105, 107, 120, and 123 each coordinate Mg(2+).

The protein belongs to the Ntdp family. The cofactor is Mg(2+).

The catalysed reaction is a ribonucleoside 5'-triphosphate + H2O = a ribonucleoside 5'-diphosphate + phosphate + H(+). It catalyses the reaction a ribonucleoside 5'-diphosphate + H2O = a ribonucleoside 5'-phosphate + phosphate + H(+). Functionally, has nucleoside phosphatase activity towards nucleoside triphosphates and nucleoside diphosphates. This is Nucleoside triphosphate/diphosphate phosphatase from Streptococcus suis (strain 98HAH33).